A 229-amino-acid polypeptide reads, in one-letter code: Transcriptional activator protein IrlR (229 aa).

In terms of domain architecture, Response regulatory spans 2-115 (RILIVEDEPK…ELVARVRSIL (114 aa)). Asp51 is modified (4-aspartylphosphate). A DNA-binding region (ompR/PhoB-type) is located at residues 123–221 (STVLRIADLE…VRGMGYVLEV (99 aa)).

Post-translationally, phosphorylated by IrlS.

Member of the two-component regulatory system IrlR/IrlS. May be involved in invasion of eukaryotic cells and heavy-metal resistance. The protein is Transcriptional activator protein IrlR (irlR) of Burkholderia pseudomallei (strain 1026b).